A 1088-amino-acid polypeptide reads, in one-letter code: Methionine S-methyltransferase (1088 aa).

Belongs to the class I-like SAM-binding methyltransferase superfamily. As to quaternary structure, homotetramer. In terms of tissue distribution, expressed in the shoot, scutellum, and aleurone cells but not in the root or endosperm.

It is found in the cytoplasm. It catalyses the reaction L-methionine + S-adenosyl-L-methionine = S-methyl-L-methionine + S-adenosyl-L-homocysteine. Catalyzes the S-methylmethionine (SMM) biosynthesis from adenosyl-L-homocysteine (AdoMet) and methionine. SMM biosynthesis (by MMT1) and degradation (by HMT-1, HMT-2 and HMT-3) constitute the SMM cycle in plants, which is probably required to achieve short term control of AdoMet level. Also able to catalyze the selenium-methylmethionine (SeMM) from AdoMet and selenium-methionine (SeMet). May play a role in phoem sulfur transport; such function is however not essential. This is Methionine S-methyltransferase (MMT1) from Hordeum vulgare (Barley).